We begin with the raw amino-acid sequence, 404 residues long: Glucose-1-phosphate adenylyltransferase (404 aa).

Alpha-D-glucose 1-phosphate is bound by residues Y99, G164, 179–180, and S197; that span reads EK.

The protein belongs to the bacterial/plant glucose-1-phosphate adenylyltransferase family. Homotetramer.

It carries out the reaction alpha-D-glucose 1-phosphate + ATP + H(+) = ADP-alpha-D-glucose + diphosphate. Its pathway is glycan biosynthesis; glycogen biosynthesis. Its function is as follows. Involved in the biosynthesis of ADP-glucose, a building block required for the elongation reactions to produce glycogen. Catalyzes the reaction between ATP and alpha-D-glucose 1-phosphate (G1P) to produce pyrophosphate and ADP-Glc. The chain is Glucose-1-phosphate adenylyltransferase from Rhodococcus erythropolis (strain PR4 / NBRC 100887).